The primary structure comprises 226 residues: Small ribosomal subunit protein uS3 (226 aa).

The KH type-2 domain occupies 39–107 (VRNFIRKKLA…PVHINIEEIR (69 aa)).

It belongs to the universal ribosomal protein uS3 family. As to quaternary structure, part of the 30S ribosomal subunit. Forms a tight complex with proteins S10 and S14.

Binds the lower part of the 30S subunit head. Binds mRNA in the 70S ribosome, positioning it for translation. This is Small ribosomal subunit protein uS3 from Alkalilimnicola ehrlichii (strain ATCC BAA-1101 / DSM 17681 / MLHE-1).